The following is a 351-amino-acid chain: Nicotinate-nucleotide--dimethylbenzimidazole phosphoribosyltransferase (351 aa).

Catalysis depends on E317, which acts as the Proton acceptor.

The protein belongs to the CobT family.

It carries out the reaction 5,6-dimethylbenzimidazole + nicotinate beta-D-ribonucleotide = alpha-ribazole 5'-phosphate + nicotinate + H(+). Its pathway is nucleoside biosynthesis; alpha-ribazole biosynthesis; alpha-ribazole from 5,6-dimethylbenzimidazole: step 1/2. Catalyzes the synthesis of alpha-ribazole-5'-phosphate from nicotinate mononucleotide (NAMN) and 5,6-dimethylbenzimidazole (DMB). The polypeptide is Nicotinate-nucleotide--dimethylbenzimidazole phosphoribosyltransferase (Ectopseudomonas mendocina (strain ymp) (Pseudomonas mendocina)).